We begin with the raw amino-acid sequence, 144 residues long: Prefoldin subunit alpha (144 aa).

Belongs to the prefoldin alpha subunit family. As to quaternary structure, heterohexamer of two alpha and four beta subunits.

It is found in the cytoplasm. In terms of biological role, molecular chaperone capable of stabilizing a range of proteins. Seems to fulfill an ATP-independent, HSP70-like function in archaeal de novo protein folding. This Methanococcus maripaludis (strain C7 / ATCC BAA-1331) protein is Prefoldin subunit alpha.